The sequence spans 494 residues: MVTKAPAKTEYEAVIGLETHCQLSTKTKIFCNCSTAFGADPNHQVCSICMGMPGVLPVLNETVLEYAVKAGRALNCEIAKYSKFDRKQYFYPDLPKNYQVSQFDLPIAEHGWLEVEIVDEQGEATRKKIGITRLHMEEDAGKLVHGGSDRLAGSTHSLVDFNRTGIPLIEIVSEPDMRTGLEAAEYAQEIRRIVRYLGVSDGNMQEGSLRCDVNISVRPRGQKEFGTKVEIKNMNSFSAIHRAIDYEIARQIEAIETGEPIIQETRLWEEGAQRTIGMRSKEGSSDYRYFPEPDLTPIEVAPSLLKQWQSELPELPAAKRHRYEEEIGLSPYDTRILTDDHAITQYFEATLKAGASAKQAANWLMGDITGYLNNESLSITDIALTPEALAELIELIEANTISGKIAKELLPELLTKGGSPKKLVKKKGLTQISDAATLESLIDEVLAAHPQELEQYRNGKTKLQGFFMGQVMKRTSGRADPKATNQMLAKKLKG.

The disordered stretch occupies residues 475-494; the sequence is TSGRADPKATNQMLAKKLKG.

The protein belongs to the GatB/GatE family. GatB subfamily. In terms of assembly, heterotrimer of A, B and C subunits.

The enzyme catalyses L-glutamyl-tRNA(Gln) + L-glutamine + ATP + H2O = L-glutaminyl-tRNA(Gln) + L-glutamate + ADP + phosphate + H(+). It catalyses the reaction L-aspartyl-tRNA(Asn) + L-glutamine + ATP + H2O = L-asparaginyl-tRNA(Asn) + L-glutamate + ADP + phosphate + 2 H(+). Its function is as follows. Allows the formation of correctly charged Asn-tRNA(Asn) or Gln-tRNA(Gln) through the transamidation of misacylated Asp-tRNA(Asn) or Glu-tRNA(Gln) in organisms which lack either or both of asparaginyl-tRNA or glutaminyl-tRNA synthetases. The reaction takes place in the presence of glutamine and ATP through an activated phospho-Asp-tRNA(Asn) or phospho-Glu-tRNA(Gln). This Acaryochloris marina (strain MBIC 11017) protein is Aspartyl/glutamyl-tRNA(Asn/Gln) amidotransferase subunit B.